Consider the following 294-residue polypeptide: Undecaprenyl-diphosphatase (294 aa).

6 helical membrane passes run proline 39–phenylalanine 59, alanine 93–leucine 113, asparagine 123–alanine 143, serine 198–valine 218, proline 232–leucine 252, and isoleucine 268–proline 288.

Belongs to the UppP family.

Its subcellular location is the cell membrane. It carries out the reaction di-trans,octa-cis-undecaprenyl diphosphate + H2O = di-trans,octa-cis-undecaprenyl phosphate + phosphate + H(+). In terms of biological role, catalyzes the dephosphorylation of undecaprenyl diphosphate (UPP). Confers resistance to bacitracin. This is Undecaprenyl-diphosphatase from Bifidobacterium longum (strain DJO10A).